The following is a 336-amino-acid chain: Inositol 2-dehydrogenase (336 aa).

Belongs to the Gfo/Idh/MocA family. Homotetramer.

The catalysed reaction is myo-inositol + NAD(+) = scyllo-inosose + NADH + H(+). In terms of biological role, involved in the oxidation of myo-inositol (MI) to 2-keto-myo-inositol (2KMI or 2-inosose). The chain is Inositol 2-dehydrogenase from Pseudomonas fluorescens (strain SBW25).